Consider the following 156-residue polypeptide: Small ribosomal subunit protein bS16 (156 aa).

A compositionally biased stretch (basic and acidic residues) spans 85-120 (GESGAEGTLKSKSEKEAFVAPERDSVILPEEPKQEE). Residues 85-156 (GESGAEGTLK…APAEDAEKSE (72 aa)) are disordered. Positions 132–150 (PAEEAAEAPAEEAAEAPAE) are enriched in acidic residues.

It belongs to the bacterial ribosomal protein bS16 family.

The sequence is that of Small ribosomal subunit protein bS16 from Micrococcus luteus (strain ATCC 4698 / DSM 20030 / JCM 1464 / CCM 169 / CCUG 5858 / IAM 1056 / NBRC 3333 / NCIMB 9278 / NCTC 2665 / VKM Ac-2230) (Micrococcus lysodeikticus).